A 545-amino-acid polypeptide reads, in one-letter code: T-complex protein 1 subunit alpha (545 aa).

The protein belongs to the TCP-1 chaperonin family. Heterooligomeric complex of about 850 to 900 kDa that forms two stacked rings, 12 to 16 nm in diameter.

It localises to the cytoplasm. Its function is as follows. Molecular chaperone; assists the folding of proteins upon ATP hydrolysis. Known to play a role, in vitro, in the folding of actin and tubulin. In Schistosoma mansoni (Blood fluke), this protein is T-complex protein 1 subunit alpha (TCP-1A).